A 150-amino-acid chain; its full sequence is Peptide deformylase (150 aa).

Positions 88 and 130 each coordinate Fe cation. Residue Glu-131 is part of the active site. Fe cation is bound at residue His-134.

The protein belongs to the polypeptide deformylase family. The cofactor is Fe(2+).

The catalysed reaction is N-terminal N-formyl-L-methionyl-[peptide] + H2O = N-terminal L-methionyl-[peptide] + formate. Functionally, removes the formyl group from the N-terminal Met of newly synthesized proteins. Requires at least a dipeptide for an efficient rate of reaction. N-terminal L-methionine is a prerequisite for activity but the enzyme has broad specificity at other positions. The protein is Peptide deformylase of Desulfitobacterium hafniense (strain DSM 10664 / DCB-2).